Consider the following 343-residue polypeptide: uncharacterized protein (343 aa).

The protein belongs to the histone deacetylase family.

Functionally, putative deacetylase. This is an uncharacterized protein from Methanocaldococcus jannaschii (strain ATCC 43067 / DSM 2661 / JAL-1 / JCM 10045 / NBRC 100440) (Methanococcus jannaschii).